We begin with the raw amino-acid sequence, 338 residues long: Ketol-acid reductoisomerase (NADP(+)) (338 aa).

One can recognise a KARI N-terminal Rossmann domain in the interval 1–181; the sequence is MQVYYDKDCD…GGGRTGIIET (181 aa). NADP(+)-binding positions include 24–27, arginine 47, serine 50, serine 52, and 82–85; these read FGSQ and DEFQ. Histidine 107 is an active-site residue. NADP(+) is bound at residue glycine 133. One can recognise a KARI C-terminal knotted domain in the interval 182-327; that stretch reads TFRDECETDL…RKLRAMMPWI (146 aa). Mg(2+)-binding residues include aspartate 190, glutamate 194, glutamate 226, and glutamate 230. Serine 251 is a binding site for substrate.

Belongs to the ketol-acid reductoisomerase family. The cofactor is Mg(2+).

It carries out the reaction (2R)-2,3-dihydroxy-3-methylbutanoate + NADP(+) = (2S)-2-acetolactate + NADPH + H(+). It catalyses the reaction (2R,3R)-2,3-dihydroxy-3-methylpentanoate + NADP(+) = (S)-2-ethyl-2-hydroxy-3-oxobutanoate + NADPH + H(+). The protein operates within amino-acid biosynthesis; L-isoleucine biosynthesis; L-isoleucine from 2-oxobutanoate: step 2/4. It functions in the pathway amino-acid biosynthesis; L-valine biosynthesis; L-valine from pyruvate: step 2/4. Its function is as follows. Involved in the biosynthesis of branched-chain amino acids (BCAA). Catalyzes an alkyl-migration followed by a ketol-acid reduction of (S)-2-acetolactate (S2AL) to yield (R)-2,3-dihydroxy-isovalerate. In the isomerase reaction, S2AL is rearranged via a Mg-dependent methyl migration to produce 3-hydroxy-3-methyl-2-ketobutyrate (HMKB). In the reductase reaction, this 2-ketoacid undergoes a metal-dependent reduction by NADPH to yield (R)-2,3-dihydroxy-isovalerate. The sequence is that of Ketol-acid reductoisomerase (NADP(+)) from Hydrogenovibrio crunogenus (strain DSM 25203 / XCL-2) (Thiomicrospira crunogena).